The primary structure comprises 590 residues: Neuronal PAS domain-containing protein 1 (590 aa).

One can recognise a bHLH domain in the interval 45–98 (QRKEKSRNAARSRRGKENLEFFELAKLLPLPGAISSQLDKASIVRLSVTYLRLR). The PAS 1 domain occupies 135-207 (EQHLGGHILQ…LGLRTPTPGP (73 aa)). The tract at residues 198-229 (LGLRTPTPGPPTPPSVSSSSSSSSSLADTPEI) is disordered. The segment covering 212–222 (SVSSSSSSSSS) has biased composition (low complexity). Residues 293-359 (APLAELPLHG…IRQSHVDLLD (67 aa)) enclose the PAS 2 domain. The 44-residue stretch at 365–408 (TGYYRWLQRAGGFVWLQSVATVAGSGKSPGEHHVLWVSHVLSQA) folds into the PAC domain. A disordered region spans residues 425-494 (ACEEASSPGP…SHPATPRPEF (70 aa)). Over residues 433–442 (GPEPTEPEPP) the composition is skewed to pro residues. Residues 463 to 476 (IKVEPGPRETKGSE) show a composition bias toward basic and acidic residues.

In terms of assembly, efficient DNA binding requires dimerization with another bHLH protein. Interacts with ARNT; forms a heterodimer that binds core DNA sequence 5'-[AG]CGTG-3' within the hypoxia response element (HRE) leading to a transcriptional repressor on its target gene TH.

The protein localises to the nucleus. Functionally, may control regulatory pathways relevant to schizophrenia and to psychotic illness. May play a role in late central nervous system development by modulating EPO expression in response to cellular oxygen level. Forms a heterodimer that binds core DNA sequence 5'-TACGTG-3' within the hypoxia response element (HRE) leading to transcriptional repression on its target gene TH. This is Neuronal PAS domain-containing protein 1 (NPAS1) from Homo sapiens (Human).